The following is a 308-amino-acid chain: HTH-type transcriptional regulator SsuR (308 aa).

The 59-residue stretch at 1-59 folds into the HTH lysR-type domain; it reads MNFQQLRFVREAVRQNMNLTEVANVLYTSQSGVSKQIKDLEDELGVDIFIRRGKRLTGL. The segment at residues 19-38 is a DNA-binding region (H-T-H motif); sequence LTEVANVLYTSQSGVSKQIK.

This sequence belongs to the LysR transcriptional regulatory family.

Its function is as follows. Transcriptional regulator that is essential for the utilization of a number of organic sulfur sources of either environmental or human origin. Required for aliphatic sulfonate utilization. Binds to DNA at target promoter regions. Targets include the ssuDBC operon, the tauABC operon, three tauD-type genes and atsA. The sequence is that of HTH-type transcriptional regulator SsuR from Burkholderia cenocepacia (strain ATCC BAA-245 / DSM 16553 / LMG 16656 / NCTC 13227 / J2315 / CF5610) (Burkholderia cepacia (strain J2315)).